The following is a 316-amino-acid chain: Ribosomal protein L11 methyltransferase (316 aa).

S-adenosyl-L-methionine-binding residues include threonine 161, glycine 182, aspartate 204, and asparagine 249.

It belongs to the methyltransferase superfamily. PrmA family.

Its subcellular location is the cytoplasm. The enzyme catalyses L-lysyl-[protein] + 3 S-adenosyl-L-methionine = N(6),N(6),N(6)-trimethyl-L-lysyl-[protein] + 3 S-adenosyl-L-homocysteine + 3 H(+). In terms of biological role, methylates ribosomal protein L11. The chain is Ribosomal protein L11 methyltransferase from Ruminiclostridium cellulolyticum (strain ATCC 35319 / DSM 5812 / JCM 6584 / H10) (Clostridium cellulolyticum).